We begin with the raw amino-acid sequence, 1404 residues long: DNA-directed RNA polymerase subunit beta' (1404 aa).

Residues cysteine 70, cysteine 72, cysteine 85, and cysteine 88 each coordinate Zn(2+). The Mg(2+) site is built by aspartate 460, aspartate 462, and aspartate 464. The Zn(2+) site is built by cysteine 814, cysteine 888, cysteine 895, and cysteine 898.

The protein belongs to the RNA polymerase beta' chain family. In terms of assembly, the RNAP catalytic core consists of 2 alpha, 1 beta, 1 beta' and 1 omega subunit. When a sigma factor is associated with the core the holoenzyme is formed, which can initiate transcription. Mg(2+) is required as a cofactor. Requires Zn(2+) as cofactor.

It carries out the reaction RNA(n) + a ribonucleoside 5'-triphosphate = RNA(n+1) + diphosphate. Functionally, DNA-dependent RNA polymerase catalyzes the transcription of DNA into RNA using the four ribonucleoside triphosphates as substrates. In Shewanella amazonensis (strain ATCC BAA-1098 / SB2B), this protein is DNA-directed RNA polymerase subunit beta'.